We begin with the raw amino-acid sequence, 102 residues long: Small ribosomal subunit protein uS10 (102 aa).

Belongs to the universal ribosomal protein uS10 family. As to quaternary structure, part of the 30S ribosomal subunit.

In terms of biological role, involved in the binding of tRNA to the ribosomes. This chain is Small ribosomal subunit protein uS10, found in Exiguobacterium sibiricum (strain DSM 17290 / CCUG 55495 / CIP 109462 / JCM 13490 / 255-15).